An 838-amino-acid polypeptide reads, in one-letter code: Tuftelin-interacting protein 11 (838 aa).

A compositionally biased stretch (basic and acidic residues) spans Met1–His13. Positions Met1 to Thr51 are required for interaction with DHX15. Disordered regions lie at residues Met1–Asp74 and Leu86–Thr137. Position 2 is a phosphoserine (Ser2). Residues Leu14–Asp29 are compositionally biased toward acidic residues. A compositionally biased stretch (basic and acidic residues) spans Gln45–Pro65. Ser60, Ser96, and Ser99 each carry phosphoserine. Acidic residues predominate over residues Glu92 to Ala101. The span at Glu102–Pro117 shows a compositional bias: basic and acidic residues. Residue Ser145 is modified to Phosphoserine. The 47-residue stretch at Thr150 to Ser196 folds into the G-patch domain. The interval Ala193–Pro237 is disordered. The residue at position 211 (Ser211) is a Phosphoserine. Over residues Glu218–Gly232 the composition is skewed to basic and acidic residues. The Nuclear localization signal signature appears at Val701–Asn706. Positions Ile711 to Leu735 are required for nuclear speckle localization.

Belongs to the TFP11/STIP family. As to quaternary structure, identified in the spliceosome C complex. Found in the Intron Large (IL) complex, a post-mRNA release spliceosomal complex containing the excised intron, U2, U5 and U6 snRNPs, and splicing factors. Interacts with TUFT1. Interacts with DHX15; indicative for a recruitment of DHX15 to the IL complex. Interacts with GCFC2. In terms of tissue distribution, widely expressed. In tooth it is expressed in ameloblasts and odontoblasts.

The protein resides in the cytoplasm. Its subcellular location is the nucleus. Involved in pre-mRNA splicing, specifically in spliceosome disassembly during late-stage splicing events. Intron turnover seems to proceed through reactions in two lariat-intron associated complexes termed Intron Large (IL) and Intron Small (IS). In cooperation with DHX15 seems to mediate the transition of the U2, U5 and U6 snRNP-containing IL complex to the snRNP-free IS complex leading to efficient debranching and turnover of excised introns. May play a role in the differentiation of ameloblasts and odontoblasts or in the forming of the enamel extracellular matrix. This chain is Tuftelin-interacting protein 11 (Tfip11), found in Mus musculus (Mouse).